A 77-amino-acid chain; its full sequence is Beta-defensin 135 (77 aa).

The first 24 residues, 1 to 24, serve as a signal peptide directing secretion; the sequence is MATRSVLLALVVLNLLFYVPPGRS. 3 disulfide bridges follow: Cys-37-Cys-64, Cys-44-Cys-58, and Cys-48-Cys-65.

The protein belongs to the beta-defensin family.

The protein resides in the secreted. Has antibacterial activity. This is Beta-defensin 135 (DEFB135) from Homo sapiens (Human).